The primary structure comprises 439 residues: Deacetylvindoline O-acetyltransferase (439 aa).

His-158 acts as the Proton acceptor in catalysis. Positions 317–344 (TKLVINELRKEKQKIKNLSREKLTYVAQ) form a coiled coil. Asp-380 serves as the catalytic Proton acceptor.

Belongs to the plant acyltransferase family. Monomer. As to expression, predominantly expressed in young leaves of mature plants. Low expression in stems and flowers and not detected in roots. Confined to the laticifer and idioblast cells of leaves, stems, and flower buds.

It is found in the cytoplasm. It localises to the nucleus. It catalyses the reaction 4-O-deacetylvindoline + acetyl-CoA = vindoline + CoA. Its pathway is alkaloid biosynthesis; vindoline biosynthesis. In terms of biological role, involved in the biosynthesis of vindoline, a precursor of vinblastine and vincristine. The chain is Deacetylvindoline O-acetyltransferase from Catharanthus roseus (Madagascar periwinkle).